The primary structure comprises 133 residues: MQRVTITLDDDLLETLDSLSQRRGYNNRSEAIRDILRGALAQEATQEHGTQGFAVLSYVYEHEKRDLASRIVSTQHHHHDLSVATLHVHINHDDCLEIAVLKGDMGDVQHFADDVIAQRGVRHGHLQCLPKED.

Ni(2+) is bound by residues H76, H87, H89, and C95.

It belongs to the transcriptional regulatory CopG/NikR family. Homotetramer. It depends on Ni(2+) as a cofactor.

In terms of biological role, transcriptional repressor of the nikABCDE operon. Is active in the presence of excessive concentrations of intracellular nickel. The chain is Nickel-responsive regulator from Salmonella choleraesuis (strain SC-B67).